Consider the following 210-residue polypeptide: Large ribosomal subunit protein uL3 (210 aa).

The protein belongs to the universal ribosomal protein uL3 family. Part of the 50S ribosomal subunit. Forms a cluster with proteins L14 and L19.

Functionally, one of the primary rRNA binding proteins, it binds directly near the 3'-end of the 23S rRNA, where it nucleates assembly of the 50S subunit. The sequence is that of Large ribosomal subunit protein uL3 from Amoebophilus asiaticus (strain 5a2).